A 263-amino-acid polypeptide reads, in one-letter code: Acetylglutamate kinase (263 aa).

Residues 48-49 (GG), arginine 70, and asparagine 162 each bind substrate.

Belongs to the acetylglutamate kinase family. ArgB subfamily.

The protein localises to the cytoplasm. It catalyses the reaction N-acetyl-L-glutamate + ATP = N-acetyl-L-glutamyl 5-phosphate + ADP. It participates in amino-acid biosynthesis; L-arginine biosynthesis; N(2)-acetyl-L-ornithine from L-glutamate: step 2/4. Catalyzes the ATP-dependent phosphorylation of N-acetyl-L-glutamate. The sequence is that of Acetylglutamate kinase from Vibrio parahaemolyticus serotype O3:K6 (strain RIMD 2210633).